The primary structure comprises 834 residues: Mannosyl-oligosaccharide glucosidase (834 aa).

The segment covering 1 to 10 has biased composition (basic residues); it reads MARGERRRRA. A disordered region spans residues 1 to 37; it reads MARGERRRRAAAAEGARPLERARAAGRRDGRAGGARG. Topologically, residues 1-43 are cytoplasmic; the sequence is MARGERRRRAAAAEGARPLERARAAGRRDGRAGGARGSASGAA. Residues 3 to 9 carry the Endoplasmic reticulum targeting motif; sequence RGERRRR. Basic and acidic residues predominate over residues 17-31; it reads RPLERARAAGRRDGR. Residues 44 to 64 form a helical; Signal-anchor for type II membrane protein membrane-spanning segment; the sequence is LAVVVLALAFGLSGRWVLAWL. Residues 65–834 lie on the Lumenal side of the membrane; that stretch reads RVRRALTLHP…LVLLIMAEEY (770 aa). The required for endoplasmic reticulum targeting stretch occupies residues 74-136; it reads PAPSALPPDS…GTPPKLRHTC (63 aa). The active-site Proton donor is the Asp580. A glycan (N-linked (GlcNAc...) asparagine) is linked at Asn654. Glu804 (proton acceptor) is an active-site residue.

It belongs to the glycosyl hydrolase 63 family.

Its subcellular location is the endoplasmic reticulum membrane. It catalyses the reaction N(4)-(alpha-D-Glc-(1-&gt;2)-alpha-D-Glc-(1-&gt;3)-alpha-D-Glc-(1-&gt;3)-alpha-D-Man-(1-&gt;2)-alpha-D-Man-(1-&gt;2)-alpha-D-Man-(1-&gt;3)-[alpha-D-Man-(1-&gt;2)-alpha-D-Man-(1-&gt;3)-[alpha-D-Man-(1-&gt;2)-alpha-D-Man-(1-&gt;6)]-alpha-D-Man-(1-&gt;6)]-beta-D-Man-(1-&gt;4)-beta-D-GlcNAc-(1-&gt;4)-beta-D-GlcNAc)-L-asparaginyl-[protein] + H2O = N(4)-(alpha-D-Glc-(1-&gt;3)-alpha-D-Glc-(1-&gt;3)-alpha-D-Man-(1-&gt;2)-alpha-D-Man-(1-&gt;2)-alpha-D-Man-(1-&gt;3)-[alpha-D-Man-(1-&gt;2)-alpha-D-Man-(1-&gt;3)-[alpha-D-Man-(1-&gt;2)-alpha-D-Man-(1-&gt;6)]-alpha-D-Man-(1-&gt;6)]-beta-D-Man-(1-&gt;4)-beta-D-GlcNAc-(1-&gt;4)-beta-D-GlcNAc)-L-asparaginyl-[protein] + beta-D-glucose. Its pathway is glycan metabolism; N-glycan degradation. Inhibited by the deoxynojirimycin derivative N-9'-Methoxynonyl-1-Deoxynojirimycin. In the context of N-glycan degradation, cleaves the distal alpha 1,2-linked glucose residue from the Glc(3)Man(9)GlcNAc(2) oligosaccharide precursor in a highly specific manner. Functionally, (Microbial infection) Required for successful influenza or dengue virus infection; inhibition of its activity by a deoxynojirimycin derivative prevents death in mice infected with lethal doses of influenza or dengue viruses, even when administrated after infection. In Mus musculus (Mouse), this protein is Mannosyl-oligosaccharide glucosidase.